A 485-amino-acid polypeptide reads, in one-letter code: Aspartyl/glutamyl-tRNA(Asn/Gln) amidotransferase subunit B (485 aa).

The protein belongs to the GatB/GatE family. GatB subfamily. As to quaternary structure, heterotrimer of A, B and C subunits.

It catalyses the reaction L-glutamyl-tRNA(Gln) + L-glutamine + ATP + H2O = L-glutaminyl-tRNA(Gln) + L-glutamate + ADP + phosphate + H(+). The catalysed reaction is L-aspartyl-tRNA(Asn) + L-glutamine + ATP + H2O = L-asparaginyl-tRNA(Asn) + L-glutamate + ADP + phosphate + 2 H(+). In terms of biological role, allows the formation of correctly charged Asn-tRNA(Asn) or Gln-tRNA(Gln) through the transamidation of misacylated Asp-tRNA(Asn) or Glu-tRNA(Gln) in organisms which lack either or both of asparaginyl-tRNA or glutaminyl-tRNA synthetases. The reaction takes place in the presence of glutamine and ATP through an activated phospho-Asp-tRNA(Asn) or phospho-Glu-tRNA(Gln). The sequence is that of Aspartyl/glutamyl-tRNA(Asn/Gln) amidotransferase subunit B from Bordetella avium (strain 197N).